Consider the following 497-residue polypeptide: Putative glucuronosyltransferase PGSIP8 (497 aa).

Residues Leu-3–Ala-23 form a helical membrane-spanning segment. 2 residues coordinate Mn(2+): Asp-165 and Asp-167. The next 5 helical transmembrane spans lie at Tyr-319–Val-339, Gly-365–Ile-385, Thr-388–Ile-408, Leu-418–Trp-438, and Gly-442–Val-462.

This sequence belongs to the glycosyltransferase 8 family. Glycogenin subfamily. Mn(2+) serves as cofactor.

It localises to the membrane. In Arabidopsis thaliana (Mouse-ear cress), this protein is Putative glucuronosyltransferase PGSIP8 (PGSIP8).